Consider the following 495-residue polypeptide: UDP-N-acetylmuramoyl-L-alanyl-D-glutamate--2,6-diaminopimelate ligase (495 aa).

Residues leucine 27, serine 29, and 44–46 contribute to the UDP-N-acetyl-alpha-D-muramoyl-L-alanyl-D-glutamate site; that span reads HQA. Residue 116–122 participates in ATP binding; that stretch reads GTNGKTT. UDP-N-acetyl-alpha-D-muramoyl-L-alanyl-D-glutamate contacts are provided by residues asparagine 157, 158–159, serine 185, glutamine 191, and arginine 193; that span reads TT. Residue lysine 225 is modified to N6-carboxylysine. Meso-2,6-diaminopimelate-binding positions include arginine 390, 414 to 417, glycine 465, and glutamate 469; that span reads DNPR. Positions 414-417 match the Meso-diaminopimelate recognition motif motif; sequence DNPR.

The protein belongs to the MurCDEF family. MurE subfamily. Mg(2+) is required as a cofactor. Post-translationally, carboxylation is probably crucial for Mg(2+) binding and, consequently, for the gamma-phosphate positioning of ATP.

The protein resides in the cytoplasm. The enzyme catalyses UDP-N-acetyl-alpha-D-muramoyl-L-alanyl-D-glutamate + meso-2,6-diaminopimelate + ATP = UDP-N-acetyl-alpha-D-muramoyl-L-alanyl-gamma-D-glutamyl-meso-2,6-diaminopimelate + ADP + phosphate + H(+). The protein operates within cell wall biogenesis; peptidoglycan biosynthesis. Catalyzes the addition of meso-diaminopimelic acid to the nucleotide precursor UDP-N-acetylmuramoyl-L-alanyl-D-glutamate (UMAG) in the biosynthesis of bacterial cell-wall peptidoglycan. The protein is UDP-N-acetylmuramoyl-L-alanyl-D-glutamate--2,6-diaminopimelate ligase of Escherichia coli O157:H7.